The chain runs to 498 residues: ATP synthase subunit beta, chloroplastic (498 aa).

Residue 172-179 (GGAGVGKT) coordinates ATP.

The protein belongs to the ATPase alpha/beta chains family. F-type ATPases have 2 components, CF(1) - the catalytic core - and CF(0) - the membrane proton channel. CF(1) has five subunits: alpha(3), beta(3), gamma(1), delta(1), epsilon(1). CF(0) has four main subunits: a(1), b(1), b'(1) and c(9-12).

The protein resides in the plastid. The protein localises to the chloroplast thylakoid membrane. The catalysed reaction is ATP + H2O + 4 H(+)(in) = ADP + phosphate + 5 H(+)(out). Its function is as follows. Produces ATP from ADP in the presence of a proton gradient across the membrane. The catalytic sites are hosted primarily by the beta subunits. The protein is ATP synthase subunit beta, chloroplastic of Nymphaea alba (White water-lily).